Consider the following 358-residue polypeptide: Stearoyl-CoA desaturase 2 (358 aa).

Over methionine 1–valine 71 the chain is Cytoplasmic. Positions threonine 16–histidine 39 are disordered. Residues tryptophan 72 to valine 92 traverse the membrane as a helical segment. Substrate is bound at residue asparagine 74. Over proline 93 to lysine 96 the chain is Lumenal. The helical transmembrane segment at leucine 97–glycine 117 threads the bilayer. Residues alanine 118–tyrosine 216 are Cytoplasmic-facing. Residues histidine 119 and histidine 124 each contribute to the Fe cation site. The short motif at histidine 119–histidine 124 is the Histidine box-1 element. Substrate is bound by residues asparagine 147, arginine 154, and aspartate 155. Fe cation contacts are provided by histidine 156, histidine 159, and histidine 160. The Histidine box-2 motif lies at histidine 156–histidine 160. Substrate is bound by residues arginine 187 and lysine 188. The helical transmembrane segment at tyrosine 217–cysteine 236 threads the bilayer. Residues tryptophan 237–threonine 240 lie on the Lumenal side of the membrane. The chain crosses the membrane as a helical span at residues phenylalanine 241–leucine 262. Tryptophan 261 contacts substrate. Over valine 263–glycine 358 the chain is Cytoplasmic. Fe cation is bound by residues histidine 268, histidine 297, histidine 300, and histidine 301. Positions histidine 297–histidine 301 match the Histidine box-3 motif.

This sequence belongs to the fatty acid desaturase type 1 family. Requires Fe(2+) as cofactor. As to expression, detected in brain and skin. Highly expressed in brain, and detected at low levels in heart, stomach, lung and testis. Detected both in dermis and epidermis.

The protein localises to the endoplasmic reticulum membrane. Its subcellular location is the microsome membrane. It catalyses the reaction octadecanoyl-CoA + 2 Fe(II)-[cytochrome b5] + O2 + 2 H(+) = (9Z)-octadecenoyl-CoA + 2 Fe(III)-[cytochrome b5] + 2 H2O. It carries out the reaction hexadecanoyl-CoA + 2 Fe(II)-[cytochrome b5] + O2 + 2 H(+) = (9Z)-hexadecenoyl-CoA + 2 Fe(III)-[cytochrome b5] + 2 H2O. Stearoyl-CoA desaturase that utilizes O(2) and electrons from reduced cytochrome b5 to introduce the first double bond into saturated fatty acyl-CoA substrates. Catalyzes the insertion of a cis double bond at the delta-9 position into fatty acyl-CoA substrates including palmitoyl-CoA and stearoyl-CoA. Gives rise to a mixture of 16:1 and 18:1 unsaturated fatty acids. Contributes to the biosynthesis of membrane phospholipids, cholesterol esters and triglycerides, especially during embryonic development and in neonates. Important for normal permeability barrier function of the skin in neonates. The polypeptide is Stearoyl-CoA desaturase 2 (Scd2) (Mus musculus (Mouse)).